The chain runs to 98 residues: NADH-ubiquinone oxidoreductase chain 4L (98 aa).

Helical transmembrane passes span 1–21 (MSIT…GMFV), 29–49 (SLLC…IVSL), and 61–81 (VILL…LIMV).

Belongs to the complex I subunit 4L family. Core subunit of respiratory chain NADH dehydrogenase (Complex I) which is composed of 45 different subunits.

Its subcellular location is the mitochondrion inner membrane. It carries out the reaction a ubiquinone + NADH + 5 H(+)(in) = a ubiquinol + NAD(+) + 4 H(+)(out). Core subunit of the mitochondrial membrane respiratory chain NADH dehydrogenase (Complex I) which catalyzes electron transfer from NADH through the respiratory chain, using ubiquinone as an electron acceptor. Part of the enzyme membrane arm which is embedded in the lipid bilayer and involved in proton translocation. This Ochotona princeps (Southern American pika) protein is NADH-ubiquinone oxidoreductase chain 4L (MT-ND4L).